The primary structure comprises 766 residues: Coenzyme PQQ synthesis protein F (766 aa).

H49 is a binding site for Zn(2+). The active-site Proton acceptor is the E52. Residues H53 and E130 each coordinate Zn(2+).

It belongs to the peptidase M16 family. The cofactor is Zn(2+).

It functions in the pathway cofactor biosynthesis; pyrroloquinoline quinone biosynthesis. Functionally, required for coenzyme pyrroloquinoline quinone (PQQ) biosynthesis. It is thought that this protein is a protease that cleaves peptides bond in a small peptide (gene pqqA), providing the glutamate and tyrosine residues which are necessary for the synthesis of PQQ. The chain is Coenzyme PQQ synthesis protein F (pqqF) from Pseudomonas putida (strain ATCC 47054 / DSM 6125 / CFBP 8728 / NCIMB 11950 / KT2440).